Consider the following 189-residue polypeptide: uncharacterized protein (189 aa).

It belongs to the OsmC/Ohr family.

This is an uncharacterized protein from Methanocaldococcus jannaschii (strain ATCC 43067 / DSM 2661 / JAL-1 / JCM 10045 / NBRC 100440) (Methanococcus jannaschii).